The primary structure comprises 186 residues: ATP-dependent protease subunit HslV (186 aa).

The active site involves T13. Residues A167, C170, and T173 each coordinate Na(+).

It belongs to the peptidase T1B family. HslV subfamily. As to quaternary structure, a double ring-shaped homohexamer of HslV is capped on each side by a ring-shaped HslU homohexamer. The assembly of the HslU/HslV complex is dependent on binding of ATP.

It localises to the cytoplasm. It carries out the reaction ATP-dependent cleavage of peptide bonds with broad specificity.. Its activity is regulated as follows. Allosterically activated by HslU binding. Its function is as follows. Protease subunit of a proteasome-like degradation complex believed to be a general protein degrading machinery. In Allorhizobium ampelinum (strain ATCC BAA-846 / DSM 112012 / S4) (Agrobacterium vitis (strain S4)), this protein is ATP-dependent protease subunit HslV.